The primary structure comprises 182 residues: Early upstream open reading frame (182 aa).

The protein belongs to the EUO family.

The polypeptide is Early upstream open reading frame (Chlamydophila psittaci (strain ATCC VR-125 / 6BC) (Chlamydia psittaci)).